Consider the following 314-residue polypeptide: Mitochondrial thiamine pyrophosphate carrier 1 (314 aa).

The next 6 helical transmembrane spans lie at 14–30 (VAAW…GLLA), 84–100 (LLYV…YSLF), 116–136 (LVVG…FDVL), 170–186 (GSIA…SIMF), 217–233 (SAGT…TFPL), and 285–302 (GILV…VSFW). Solcar repeat units lie at residues 14–103 (VAAW…FNRY), 110–195 (EARL…IRIY), and 210–310 (ELAT…AIHY).

This sequence belongs to the mitochondrial carrier (TC 2.A.29) family.

The protein resides in the mitochondrion inner membrane. Mitochondrial transporter that mediates uptake of thiamine pyrophosphate (ThPP) into mitochondria. The protein is Mitochondrial thiamine pyrophosphate carrier 1 (TPC1) of Saccharomyces cerevisiae (strain ATCC 204508 / S288c) (Baker's yeast).